An 83-amino-acid chain; its full sequence is Subtilisin-chymotrypsin inhibitor CI-1B (83 aa).

The disordered stretch occupies residues 1–28; that stretch reads MRSMEGSVPKYPEPTEGSIGASGAKRSW.

Belongs to the protease inhibitor I13 (potato type I serine protease inhibitor) family.

Its function is as follows. Inhibits both subtilisin and chymotrypsin. The protein is Subtilisin-chymotrypsin inhibitor CI-1B of Hordeum vulgare (Barley).